Here is a 260-residue protein sequence, read N- to C-terminus: Transcription factor SUM-1 (260 aa).

The 52-residue stretch at 112–163 (DKRKAATLRERRRLRKVNEAFEALKRHTCANPNQRLPKVEILRNAIEYIEKL) folds into the bHLH domain. Positions 171 to 208 (KANGDSEMDSAETSSNTSDAMTDGSSPGSYSSDKAQQY) are disordered. The segment covering 181-205 (AETSSNTSDAMTDGSSPGSYSSDKA) has biased composition (polar residues).

Efficient DNA binding requires dimerization with another bHLH protein. Homodimer, and heterodimer with the ubiquitous bHLH protein E12.

The protein localises to the nucleus. In terms of biological role, regulatory factor during embryogenesis. Conversion of pluripotent secondary mesenchyme cells to myogenic cells. It binds to the MCK enhancer element. The protein is Transcription factor SUM-1 (SUM-1) of Lytechinus variegatus (Green sea urchin).